We begin with the raw amino-acid sequence, 1027 residues long: Kinesin heavy chain isoform 5A (1027 aa).

At A2 the chain carries N-acetylalanine. A Kinesin motor domain is found at 9-327; that stretch reads SIKVLCRFRP…LMFGQRAKTI (319 aa). 86-93 contributes to the ATP binding site; it reads GQTSSGKT. The segment at 174–315 is microtubule-binding; that stretch reads VSSPEEILDV…PSSYNDAETK (142 aa). Residues 271-361 form a necessary for interaction with ZFYVE27 region; it reads EGTKSYVPYR…KTKAQKETIA (91 aa). Positions 331–906 form a coiled coil; that stretch reads ASVNLELTAE…VDRIKEAVRY (576 aa). The interval 353 to 1027 is interaction with BICD2; sequence TKAQKETIAK…FPLHQETAAS (675 aa). Phosphothreonine is present on T397. A disordered region spans residues 906 to 937; sequence YKSSGKRGHSAQIAKPVRPGHYPASSPTNPYG. Residues 907-1027 are globular; that stretch reads KSSGKRGHSA…FPLHQETAAS (121 aa).

The protein belongs to the TRAFAC class myosin-kinesin ATPase superfamily. Kinesin family. Kinesin subfamily. Oligomer composed of two heavy chains and two light chains. Interacts with GRIP1. Interacts with FMR1 (via C-terminus); this interaction is increased in a mGluR-dependent manner. Interacts with BORCS5. Interacts with ZFYVE27. Interacts with VAPA, VAPB, SURF4, RAB11A (GDP-bound form), RAB11B (GDP-bound form) and RTN3 in a ZFYVE27-dependent manner. Interacts with BICD2. Interacts with DTNB.

Its subcellular location is the cytoplasm. It is found in the perinuclear region. The protein resides in the cytoskeleton. It localises to the perikaryon. The enzyme catalyses ATP + H2O + a kinesin associated with a microtubule at position (n) = ADP + phosphate a kinesin associated with a microtubule at position (n+1, toward the plus end).. Functionally, microtubule-dependent motor required for slow axonal transport of neurofilament proteins (NFH, NFM and NFL). Can induce formation of neurite-like membrane protrusions in non-neuronal cells in a ZFYVE27-dependent manner. The ZFYVE27-KIF5A complex contributes to the vesicular transport of VAPA, VAPB, SURF4, RAB11A, RAB11B and RTN3 proteins in neurons. Required for anterograde axonal transportation of MAPK8IP3/JIP3 which is essential for MAPK8IP3/JIP3 function in axon elongation. The sequence is that of Kinesin heavy chain isoform 5A (Kif5a) from Mus musculus (Mouse).